The following is an 835-amino-acid chain: Axin-1 (835 aa).

The segment at 16–60 (LGSSFTEDAPRPPVPGEEGDLVSSDGRQYNHSFYSSKSDSLKNEA) is disordered. Positions 40-53 (DGRQYNHSFYSSKS) are enriched in polar residues. The region spanning 92–214 (SLHSLLDDQD…LKSDIYLEYT (123 aa)) is the RGS domain. Residues 318–349 (ATSANDSEQQSMSSDADTLSLTDSSVDGVPPY) are disordered. Residues 328–344 (SMSSDADTLSLTDSSVD) show a composition bias toward low complexity. The segment at 351-436 (YRKPHRREIH…DADISTGPSL (86 aa)) is interaction with GSK3B. Positions 437–512 (ANHRVPPAVH…SPDGLPAGKI (76 aa)) are interaction with beta-catenin. 2 disordered regions span residues 485-530 (KTPG…QARQ) and 602-627 (GYSS…FEMR). The segment covering 616 to 627 (RKGEDGRNFEMR) has biased composition (basic and acidic residues). The region spanning 753-835 (CENITVAYYF…KIIGKVEKVD (83 aa)) is the DIX domain.

In terms of assembly, homodimer. Interacts with dixdc1. Interacts with hwa; leading to promote the tankyrase-mediated degradation of axin1. ADP-ribosylated by tankyrase tnks and tnks2. Poly-ADP-ribosylated protein is recognized by rnf146, followed by ubiquitination at 'Lys-48' and subsequent activation of the Wnt signaling pathway. Post-translationally, ubiquitinated by rnf146 when poly-ADP-ribosylated, leading to its degradation and subsequent activation of the Wnt signaling pathway.

It localises to the cytoplasm. Its subcellular location is the nucleus. It is found in the membrane. The protein localises to the cell membrane. Its function is as follows. Component of the beta-catenin destruction complex required for regulating ctnnb1 levels through phosphorylation and ubiquitination, and modulating Wnt-signaling. Controls dorsoventral patterning via two opposing effects: down-regulates ctnnb1 to inhibit the Wnt signaling pathway and ventralize embryos, but also dorsalizes embryos by activating a Wnt-independent JNK signaling pathway. This Danio rerio (Zebrafish) protein is Axin-1 (axin1).